The following is a 205-amino-acid chain: dTTP/UTP pyrophosphatase (205 aa).

The Proton acceptor role is filled by D71.

Belongs to the Maf family. YhdE subfamily. A divalent metal cation is required as a cofactor.

Its subcellular location is the cytoplasm. The enzyme catalyses dTTP + H2O = dTMP + diphosphate + H(+). It carries out the reaction UTP + H2O = UMP + diphosphate + H(+). Its function is as follows. Nucleoside triphosphate pyrophosphatase that hydrolyzes dTTP and UTP. May have a dual role in cell division arrest and in preventing the incorporation of modified nucleotides into cellular nucleic acids. This Syntrophus aciditrophicus (strain SB) protein is dTTP/UTP pyrophosphatase.